Consider the following 474-residue polypeptide: MTEELDNTPSPAGDIPQETLPKPLPAPEETAGEQPAAAPEENRGNAVREEEEAAPVLEQIDINELRKRPLNDLQEMAEGLPIRNAASLTKSQLVFELGKQLLAKGHEVVVSGVMEQAKDNYAMLRDPVKSFRTSPDDIYLGGNLIKPLHLRVGQQIKVRLRKLRPHDKYLSAASVISVEDIPAEDYRARSDFERLTPLFPKERLLLENKGVNSAAMRVLDLMTPFGKGQRGLIVAPPRGGKTVLLKTIARSIRANYPEVELIVLLLDERPEEVTDFEETVDAPVFASTFDEPSRRHAQVSDLVIERAKRLVEMGRDVVILLDSLTRLARGYNANQTGGRIMSGGLGSNALEKPRKFFSAARNVEEGGSLTIIATCLVDTESRMDEVIFEEFKGTGNLEIRLDRELSERRIYPAISLSQSGTRNDDRLYNEQEFVKIMQLRRQLAMKPGWEGLQTLLQNISKTQNNAELLLTGLR.

The interval M1–I60 is disordered. Residues E107 to P182 form the Rho RNA-BD domain. Residues G226–G231, R238–V243, and R269 contribute to the ATP site.

This sequence belongs to the Rho family. Homohexamer. The homohexamer assembles into an open ring structure.

In terms of biological role, facilitates transcription termination by a mechanism that involves Rho binding to the nascent RNA, activation of Rho's RNA-dependent ATPase activity, and release of the mRNA from the DNA template. This Akkermansia muciniphila (strain ATCC BAA-835 / DSM 22959 / JCM 33894 / BCRC 81048 / CCUG 64013 / CIP 107961 / Muc) protein is Transcription termination factor Rho.